Here is a 271-residue protein sequence, read N- to C-terminus: Ribosomal RNA small subunit methyltransferase A (271 aa).

N22, L24, G49, E70, D96, and N116 together coordinate S-adenosyl-L-methionine.

Belongs to the class I-like SAM-binding methyltransferase superfamily. rRNA adenine N(6)-methyltransferase family. RsmA subfamily.

The protein localises to the cytoplasm. It catalyses the reaction adenosine(1518)/adenosine(1519) in 16S rRNA + 4 S-adenosyl-L-methionine = N(6)-dimethyladenosine(1518)/N(6)-dimethyladenosine(1519) in 16S rRNA + 4 S-adenosyl-L-homocysteine + 4 H(+). Functionally, specifically dimethylates two adjacent adenosines (A1518 and A1519) in the loop of a conserved hairpin near the 3'-end of 16S rRNA in the 30S particle. May play a critical role in biogenesis of 30S subunits. In Sphingopyxis alaskensis (strain DSM 13593 / LMG 18877 / RB2256) (Sphingomonas alaskensis), this protein is Ribosomal RNA small subunit methyltransferase A.